A 475-amino-acid polypeptide reads, in one-letter code: Argininosuccinate lyase 1 (475 aa).

The protein belongs to the lyase 1 family. Argininosuccinate lyase subfamily.

The protein localises to the cytoplasm. It catalyses the reaction 2-(N(omega)-L-arginino)succinate = fumarate + L-arginine. The protein operates within amino-acid biosynthesis; L-arginine biosynthesis; L-arginine from L-ornithine and carbamoyl phosphate: step 3/3. The polypeptide is Argininosuccinate lyase 1 (Pseudomonas fluorescens (strain Pf0-1)).